The chain runs to 358 residues: Protein SRG1 (358 aa).

Residues 209-309 (SVQSMRMNYY…RLSIATFHNV (101 aa)) enclose the Fe2OG dioxygenase domain. 3 residues coordinate Fe cation: His-233, Asp-235, and His-290.

Belongs to the iron/ascorbate-dependent oxidoreductase family. In terms of tissue distribution, low expression in roots and leaves.

The sequence is that of Protein SRG1 (SRG1) from Arabidopsis thaliana (Mouse-ear cress).